Here is a 400-residue protein sequence, read N- to C-terminus: 1-deoxy-D-xylulose 5-phosphate reductoisomerase (400 aa).

Positions 17, 18, 19, 20, and 131 each coordinate NADPH. A 1-deoxy-D-xylulose 5-phosphate-binding site is contributed by Lys132. Glu133 is a binding site for NADPH. Mn(2+) is bound at residue Asp157. Residues Ser158, Glu159, Ser188, and His211 each coordinate 1-deoxy-D-xylulose 5-phosphate. Glu159 is a binding site for Mn(2+). Gly217 serves as a coordination point for NADPH. 4 residues coordinate 1-deoxy-D-xylulose 5-phosphate: Ser224, Asn229, Lys230, and Glu233. Glu233 is a binding site for Mn(2+).

It belongs to the DXR family. Mg(2+) is required as a cofactor. The cofactor is Mn(2+).

It catalyses the reaction 2-C-methyl-D-erythritol 4-phosphate + NADP(+) = 1-deoxy-D-xylulose 5-phosphate + NADPH + H(+). It participates in isoprenoid biosynthesis; isopentenyl diphosphate biosynthesis via DXP pathway; isopentenyl diphosphate from 1-deoxy-D-xylulose 5-phosphate: step 1/6. Catalyzes the NADPH-dependent rearrangement and reduction of 1-deoxy-D-xylulose-5-phosphate (DXP) to 2-C-methyl-D-erythritol 4-phosphate (MEP). The polypeptide is 1-deoxy-D-xylulose 5-phosphate reductoisomerase (Pseudomonas putida (strain ATCC 700007 / DSM 6899 / JCM 31910 / BCRC 17059 / LMG 24140 / F1)).